We begin with the raw amino-acid sequence, 230 residues long: 5'-methylthioadenosine/S-adenosylhomocysteine nucleosidase (230 aa).

Glu12 functions as the Proton acceptor in the catalytic mechanism. Residues Gly78, Met153, and 174–175 (ME) each bind substrate. Asp198 functions as the Proton donor in the catalytic mechanism.

The protein belongs to the PNP/UDP phosphorylase family. MtnN subfamily.

It catalyses the reaction S-adenosyl-L-homocysteine + H2O = S-(5-deoxy-D-ribos-5-yl)-L-homocysteine + adenine. The enzyme catalyses S-methyl-5'-thioadenosine + H2O = 5-(methylsulfanyl)-D-ribose + adenine. The catalysed reaction is 5'-deoxyadenosine + H2O = 5-deoxy-D-ribose + adenine. The protein operates within amino-acid biosynthesis; L-methionine biosynthesis via salvage pathway; S-methyl-5-thio-alpha-D-ribose 1-phosphate from S-methyl-5'-thioadenosine (hydrolase route): step 1/2. In terms of biological role, catalyzes the irreversible cleavage of the glycosidic bond in both 5'-methylthioadenosine (MTA) and S-adenosylhomocysteine (SAH/AdoHcy) to adenine and the corresponding thioribose, 5'-methylthioribose and S-ribosylhomocysteine, respectively. Also cleaves 5'-deoxyadenosine, a toxic by-product of radical S-adenosylmethionine (SAM) enzymes, into 5-deoxyribose and adenine. The polypeptide is 5'-methylthioadenosine/S-adenosylhomocysteine nucleosidase (Lysinibacillus sphaericus (strain C3-41)).